The primary structure comprises 293 residues: Ribosomal protein L11 methyltransferase (293 aa).

S-adenosyl-L-methionine is bound by residues threonine 145, glycine 166, aspartate 188, and asparagine 230.

This sequence belongs to the methyltransferase superfamily. PrmA family.

The protein resides in the cytoplasm. The catalysed reaction is L-lysyl-[protein] + 3 S-adenosyl-L-methionine = N(6),N(6),N(6)-trimethyl-L-lysyl-[protein] + 3 S-adenosyl-L-homocysteine + 3 H(+). Its function is as follows. Methylates ribosomal protein L11. The protein is Ribosomal protein L11 methyltransferase of Salmonella newport (strain SL254).